The following is a 610-amino-acid chain: Replication protein E1 (610 aa).

Positions 83–85 match the Nuclear localization signal motif; that stretch reads KRK. A phosphoserine; by host mark is found at Ser-93 and Ser-102. Positions 101–110 match the Nuclear export signal motif; the sequence is LSPRLEAVTI. A DNA-binding region region spans residues 148 to 312; that stretch reads ESGTLVVETD…MLDHESAASS (165 aa). The SF3 helicase domain occupies 411–561; that stretch reads VNFISFLCAL…LPLKENDEVL (151 aa). 437 to 444 serves as a coordination point for ATP; sequence GPPDTGKS. Lys-518 is covalently cross-linked (Glycyl lysine isopeptide (Lys-Gly) (interchain with G-Cter in SUMO)). Residues 591-610 form a disordered region; it reads ESGRSDRAFRCTAGTNTESI.

It belongs to the papillomaviridae E1 protein family. Can form hexamers. Interacts with E2 protein; this interaction increases E1 DNA binding specificity. Interacts with host DNA polymerase subunit POLA2. Interacts with host single stranded DNA-binding protein RPA1. Interacts with host TOP1; this interaction stimulates the enzymatic activity of TOP1. Post-translationally, phosphorylated. In terms of processing, sumoylated.

The protein resides in the host nucleus. It catalyses the reaction Couples ATP hydrolysis with the unwinding of duplex DNA by translocating in the 3'-5' direction.. It carries out the reaction ATP + H2O = ADP + phosphate + H(+). ATP-dependent DNA 3'-5' helicase required for initiation of viral DNA replication. It forms a complex with the viral E2 protein. The E1-E2 complex binds to the replication origin which contains binding sites for both proteins. During the initial step, a dimer of E1 interacts with a dimer of protein E2 leading to a complex that binds the viral origin of replication with high specificity. Then, a second dimer of E1 displaces the E2 dimer in an ATP-dependent manner to form the E1 tetramer. Following this, two E1 monomers are added to each half of the site, which results in the formation of two E1 trimers on the viral ori. Subsequently, two hexamers will be created. The double hexamer acts as a bi-directional helicase machinery and unwinds the viral DNA and then recruits the host DNA polymerase to start replication. In Human papillomavirus type 60, this protein is Replication protein E1.